We begin with the raw amino-acid sequence, 498 residues long: Probable lysophospholipase BODYGUARD 3 (498 aa).

An N-terminal signal peptide occupies residues M1–Y55. C56 carries the N-palmitoyl cysteine lipid modification. The region spanning V220–P326 is the AB hydrolase-1 domain. H224 is a catalytic residue. S297 acts as the Nucleophile in catalysis. Active-site charge relay system residues include D446 and H474.

The protein localises to the cell membrane. It localises to the secreted. It is found in the cell wall. Its function is as follows. Involved in cuticle development and morphogenesis. This chain is Probable lysophospholipase BODYGUARD 3, found in Arabidopsis thaliana (Mouse-ear cress).